The following is a 182-amino-acid chain: Probable inosine/xanthosine triphosphatase (182 aa).

2 residues coordinate Mg(2+): glutamate 42 and aspartate 69.

Belongs to the YjjX NTPase family. Homodimer. Requires Mg(2+) as cofactor. Mn(2+) serves as cofactor.

The enzyme catalyses XTP + H2O = XDP + phosphate + H(+). It catalyses the reaction ITP + H2O = IDP + phosphate + H(+). Phosphatase that hydrolyzes non-canonical purine nucleotides such as XTP and ITP to their respective diphosphate derivatives. Probably excludes non-canonical purines from DNA/RNA precursor pool, thus preventing their incorporation into DNA/RNA and avoiding chromosomal lesions. The sequence is that of Probable inosine/xanthosine triphosphatase from Methanothermobacter thermautotrophicus (strain ATCC 29096 / DSM 1053 / JCM 10044 / NBRC 100330 / Delta H) (Methanobacterium thermoautotrophicum).